The primary structure comprises 426 residues: Enolase (426 aa).

Residue glutamine 163 coordinates (2R)-2-phosphoglycerate. Glutamate 205 (proton donor) is an active-site residue. Mg(2+) contacts are provided by aspartate 242, glutamate 286, and aspartate 313. (2R)-2-phosphoglycerate is bound by residues lysine 338, arginine 367, serine 368, and lysine 389. The active-site Proton acceptor is lysine 338.

It belongs to the enolase family. The cofactor is Mg(2+).

It localises to the cytoplasm. Its subcellular location is the secreted. It is found in the cell surface. The enzyme catalyses (2R)-2-phosphoglycerate = phosphoenolpyruvate + H2O. The protein operates within carbohydrate degradation; glycolysis; pyruvate from D-glyceraldehyde 3-phosphate: step 4/5. In terms of biological role, catalyzes the reversible conversion of 2-phosphoglycerate (2-PG) into phosphoenolpyruvate (PEP). It is essential for the degradation of carbohydrates via glycolysis. The polypeptide is Enolase (Helicobacter pylori (strain Shi470)).